A 316-amino-acid polypeptide reads, in one-letter code: Biotin synthase (316 aa).

The Radical SAM core domain occupies 36–264; it reads TEIQISTLLS…ASRVRLAAGR (229 aa). [4Fe-4S] cluster-binding residues include cysteine 51, cysteine 55, and cysteine 58. Cysteine 96, cysteine 127, cysteine 187, and arginine 259 together coordinate [2Fe-2S] cluster.

It belongs to the radical SAM superfamily. Biotin synthase family. In terms of assembly, homodimer. The cofactor is [4Fe-4S] cluster. [2Fe-2S] cluster is required as a cofactor.

It carries out the reaction (4R,5S)-dethiobiotin + (sulfur carrier)-SH + 2 reduced [2Fe-2S]-[ferredoxin] + 2 S-adenosyl-L-methionine = (sulfur carrier)-H + biotin + 2 5'-deoxyadenosine + 2 L-methionine + 2 oxidized [2Fe-2S]-[ferredoxin]. The protein operates within cofactor biosynthesis; biotin biosynthesis; biotin from 7,8-diaminononanoate: step 2/2. Its function is as follows. Catalyzes the conversion of dethiobiotin (DTB) to biotin by the insertion of a sulfur atom into dethiobiotin via a radical-based mechanism. The chain is Biotin synthase from Gluconacetobacter diazotrophicus (strain ATCC 49037 / DSM 5601 / CCUG 37298 / CIP 103539 / LMG 7603 / PAl5).